A 270-amino-acid polypeptide reads, in one-letter code: Chromo domain-containing protein cec-4 (270 aa).

Disordered regions lie at residues 1 to 24 (MAKK…ETSK) and 143 to 229 (KIAQ…KNDV). The Chromo domain occupies 87 to 147 (YAVERVLAHR…HQEDLKIAQT (61 aa)). Basic residues-rich tracts occupy residues 151-167 (TPSK…KRRA) and 187-197 (TPKQSTKKLKR). Residues 205–229 (LVEKSKKKAIPDLENHTLDQEKNDV) show a composition bias toward basic and acidic residues.

In terms of assembly, interacts with mono-, di- and tri-methylated 'Lys-9' residues on histone H3. Weakly interacts with methylated 'Lys-37' residues on histone H3.

The protein localises to the nucleus inner membrane. It localises to the membrane. In terms of biological role, chromatin anchor protein which binds to methylated lysine residues on histone H3, thereby recruiting heterochromatin to the nuclear periphery, especially in embryonic cells, with a lesser role in differentiated cells. May be required for the correct positioning of chromatin and nucleoli in embryos. This is Chromo domain-containing protein cec-4 from Caenorhabditis elegans.